The sequence spans 52 residues: Rubredoxin (52 aa).

Residues 1–51 (MDKYECSICGYIYDEAEGDDGNVAAGTKFADLPADWVCPTCGADKDAFVKM) enclose the Rubredoxin-like domain. Residues Cys6, Cys9, Cys38, and Cys41 each coordinate Fe cation.

The protein belongs to the rubredoxin family. The cofactor is Fe(3+).

Rubredoxin is a small nonheme, iron protein lacking acid-labile sulfide. Its single Fe, chelated to 4 Cys, functions as an electron acceptor and may also stabilize the conformation of the molecule. The protein is Rubredoxin of Megasphaera elsdenii.